We begin with the raw amino-acid sequence, 379 residues long: Citrate utilization protein B (379 aa).

[4Fe-4S] cluster contacts are provided by Cys28, Cys31, Cys34, Cys38, Cys62, Cys65, Cys68, and Cys72.

In Escherichia coli, this protein is Citrate utilization protein B (citB).